Reading from the N-terminus, the 774-residue chain is Polyribonucleotide nucleotidyltransferase (774 aa).

Asp-485 and Asp-491 together coordinate Mg(2+). Positions 552–611 constitute a KH domain; that stretch reads PRIETMSVPKDKIRDIIGTGGKIIREIVATTGAKVDIDDDGTVKISSSDTAQIEAARNWI. Positions 621–689 constitute an S1 motif domain; that stretch reads GKIYTGKVVN…NRGKVRLSMR (69 aa). Residues 689 to 774 are disordered; it reads RVVDQETGEE…APAFLTRDDD (86 aa). Basic and acidic residues predominate over residues 700-755; the sequence is PDTRPPREERPRGDRGDRGDRGPRRDGDRRREGGDRGPRRDRGDRGDRPRRERSEG.

It belongs to the polyribonucleotide nucleotidyltransferase family. It depends on Mg(2+) as a cofactor.

Its subcellular location is the cytoplasm. It catalyses the reaction RNA(n+1) + phosphate = RNA(n) + a ribonucleoside 5'-diphosphate. Involved in mRNA degradation. Catalyzes the phosphorolysis of single-stranded polyribonucleotides processively in the 3'- to 5'-direction. The chain is Polyribonucleotide nucleotidyltransferase from Rhizorhabdus wittichii (strain DSM 6014 / CCUG 31198 / JCM 15750 / NBRC 105917 / EY 4224 / RW1) (Sphingomonas wittichii).